The primary structure comprises 1200 residues: SR-related and CTD-associated factor 4 (1200 aa).

Residues Met1–Ser139 form the CID domain. N6-acetyllysine is present on Lys49. Positions Asn140–Gly153 are enriched in polar residues. Disordered regions lie at residues Asn140 to Ser172, Val299 to Pro324, and Ser346 to Ser566. Position 154 is a phosphoserine (Ser154). Composition is skewed to pro residues over residues Ala367 to Pro390 and Leu399 to Gln461. Over residues Pro462–Gln471 the composition is skewed to low complexity. The span at Glu493 to Lys503 shows a compositional bias: basic and acidic residues. The segment covering Ser504 to Arg541 has biased composition (basic residues). Over residues Arg543 to Gln558 the composition is skewed to basic and acidic residues. Positions Thr574–Asn648 constitute an RRM domain. Disordered stretches follow at residues Trp696–Ile724, Val834–Gly875, and Pro927–Arg1200. The residue at position 722 (Ser722) is a Phosphoserine. Composition is skewed to pro residues over residues Pro856–Thr868 and Pro927–Gly958. A compositionally biased stretch (gly residues) spans Gly965–Gly978. Low complexity predominate over residues Gln986–Gln1036. Residue Ser1058 is modified to Phosphoserine. Positions Val1063–Asp1139 are enriched in basic and acidic residues. Positions Gln1153 to Glu1162 are enriched in polar residues. Ser1178 bears the Phosphoserine mark.

In terms of assembly, interacts with POLR2A; via C-terminal heptapeptide repeat domain (CTD) phosphorylated at 'Ser-2' and 'Ser-5'.

The protein resides in the nucleus. Its function is as follows. Anti-terminator protein required to prevent early mRNA termination during transcription. Together with SCAF8, acts by suppressing the use of early, alternative poly(A) sites, thereby preventing the accumulation of non-functional truncated proteins. Mechanistically, associates with the phosphorylated C-terminal heptapeptide repeat domain (CTD) of the largest RNA polymerase II subunit (POLR2A), and subsequently binds nascent RNA upstream of early polyadenylation sites to prevent premature mRNA transcript cleavage and polyadenylation. Independently of SCAF8, also acts as a suppressor of transcriptional readthrough. In Rattus norvegicus (Rat), this protein is SR-related and CTD-associated factor 4.